We begin with the raw amino-acid sequence, 439 residues long: Innexin-19 (439 aa).

A run of 4 helical transmembrane segments spans residues 33–53, 103–123, 199–219, and 285–305; these read PLIL…GTPI, QWVP…CIFW, IVYS…FFIL, and VFAF…CSFI.

The protein belongs to the pannexin family.

It localises to the cell membrane. The protein localises to the cell junction. It is found in the gap junction. Its function is as follows. Structural component of the gap junctions that specifically coordinates left-right asymmetry in the developing nervous system. Acts by forming gap junction network linking embryonic neurons and providing electrical coupling between cells, leading to promote or inhibit AWC signaling. The protein is Innexin-19 (inx-19) of Caenorhabditis briggsae.